Here is a 455-residue protein sequence, read N- to C-terminus: UDP-glycosyltransferase 87A2 (455 aa).

Methionine 1 bears the N-acetylmethionine mark. Residues serine 278, 327–329 (CDQ), 344–352 (HCGFNSTLE), and 366–369 (FWDQ) contribute to the UDP-alpha-D-glucose site.

This sequence belongs to the UDP-glycosyltransferase family.

This chain is UDP-glycosyltransferase 87A2 (UGT87A2), found in Arabidopsis thaliana (Mouse-ear cress).